A 662-amino-acid chain; its full sequence is UPF0313 protein CPF_1407 (662 aa).

One can recognise a Radical SAM core domain in the interval 296–567 (AIEEVKFSIV…AMQRALLQFK (272 aa)). [4Fe-4S] cluster contacts are provided by C310, C314, and C317. The disordered stretch occupies residues 596–662 (IRDKNSFGKG…QRSSKGKKRR (67 aa)). Positions 618–632 (SRNENSGRRESEDKK) are enriched in basic and acidic residues. The span at 633 to 644 (RSSHSKKQRGNK) shows a compositional bias: basic residues.

The protein belongs to the UPF0313 family. The cofactor is [4Fe-4S] cluster.

This Clostridium perfringens (strain ATCC 13124 / DSM 756 / JCM 1290 / NCIMB 6125 / NCTC 8237 / Type A) protein is UPF0313 protein CPF_1407.